A 337-amino-acid polypeptide reads, in one-letter code: ATP-dependent 6-phosphofructokinase (337 aa).

Residue Gly11 participates in ATP binding. An ADP-binding site is contributed by 21-25 (RAVVR). ATP contacts are provided by residues 72 to 73 (RY) and 102 to 105 (GDGS). Mg(2+) is bound at residue Asp103. 125–127 (TID) contacts substrate. Asp127 functions as the Proton acceptor in the catalytic mechanism. Residue Arg154 coordinates ADP. Residues Arg162 and 169–171 (MGR) each bind substrate. ADP-binding positions include 185 to 187 (GAD), Lys212, and 214 to 216 (KNH). Residues Glu223, Arg245, and 251–254 (HILR) each bind substrate.

Belongs to the phosphofructokinase type A (PFKA) family. ATP-dependent PFK group I subfamily. Prokaryotic clade 'B1' sub-subfamily. In terms of assembly, homotetramer. Mg(2+) is required as a cofactor.

It is found in the cytoplasm. The catalysed reaction is beta-D-fructose 6-phosphate + ATP = beta-D-fructose 1,6-bisphosphate + ADP + H(+). It functions in the pathway carbohydrate degradation; glycolysis; D-glyceraldehyde 3-phosphate and glycerone phosphate from D-glucose: step 3/4. Allosterically activated by ADP and other diphosphonucleosides, and allosterically inhibited by phosphoenolpyruvate. Functionally, catalyzes the phosphorylation of D-fructose 6-phosphate to fructose 1,6-bisphosphate by ATP, the first committing step of glycolysis. The chain is ATP-dependent 6-phosphofructokinase from Streptococcus pyogenes serotype M28 (strain MGAS6180).